The chain runs to 552 residues: Non-structural protein NS1 (552 aa).

The protein belongs to the orbivirus non-structural protein NS1 family.

This chain is Non-structural protein NS1 (Segment-5), found in Epizootic hemorrhagic disease virus 2 (strain Alberta) (EHDV-2).